A 310-amino-acid polypeptide reads, in one-letter code: Ribosomal RNA small subunit methyltransferase H (310 aa).

S-adenosyl-L-methionine is bound by residues glycine 32 to histidine 34, aspartate 52, phenylalanine 79, aspartate 100, and glutamine 107.

Belongs to the methyltransferase superfamily. RsmH family.

Its subcellular location is the cytoplasm. It catalyses the reaction cytidine(1402) in 16S rRNA + S-adenosyl-L-methionine = N(4)-methylcytidine(1402) in 16S rRNA + S-adenosyl-L-homocysteine + H(+). Its function is as follows. Specifically methylates the N4 position of cytidine in position 1402 (C1402) of 16S rRNA. This chain is Ribosomal RNA small subunit methyltransferase H, found in Bacillus cereus (strain ATCC 10987 / NRS 248).